The following is a 529-amino-acid chain: Na(+)/H(+) antiporter NhaB (529 aa).

The next 12 membrane-spanning stretches (helical) occupy residues 13–33 (FLGKAPDWYKVAIISFLIINP), 34–54 (IVFFFVDPFVAGWLLVVEFIF), 90–110 (LVANIEVLLLLVFMVAGIYFM), 113–133 (LLLFIFTKILLGIRSKAILSL), 149–166 (LTVIAVVISVAVGFYSIY), 205–225 (LLMHAGVGTALGGVTTMVGEP), 241–261 (FLIRMAPVTLPVFVCGLLTCF), 306–326 (GLIAVWLIVGLALHLAAVGLI), 327–347 (GLSVIILATAFTGVIEEHSLG), 351–371 (EEALPFTALLAVFFSIVAVII), 451–471 (ATPNGQAAFLFLLTSALAPLI), and 479–499 (VIMALPYTIVLALVGLFGIVF).

It belongs to the NhaB Na(+)/H(+) (TC 2.A.34) antiporter family.

The protein resides in the cell inner membrane. It carries out the reaction 2 Na(+)(in) + 3 H(+)(out) = 2 Na(+)(out) + 3 H(+)(in). In terms of biological role, na(+)/H(+) antiporter that extrudes sodium in exchange for external protons. The polypeptide is Na(+)/H(+) antiporter NhaB (Vibrio vulnificus (strain YJ016)).